A 404-amino-acid polypeptide reads, in one-letter code: Lissencephaly-1 homolog (404 aa).

The region spanning 7–39 (QKEEINRAIAEYMQNNGYSESFSVFLKESSLSE) is the LisH domain. Residues 54 to 81 (TTVLRLQRKVNDLESKLQESQREINHGA) are a coiled coil. The span at 69-89 (KLQESQREINHGAPTRDKRQA) shows a compositional bias: basic and acidic residues. The segment at 69–90 (KLQESQREINHGAPTRDKRQAA) is disordered. 7 WD repeats span residues 104–145 (GHRL…RTLK), 146–185 (GHTD…DCLK), 189–228 (GHEH…CVYT), 231–270 (GHND…AKLV), 273–327 (DHEH…VLFT), 330–369 (AHEN…CMKA), and 372–404 (AHEH…WECR).

The protein belongs to the WD repeat LIS1/nudF family. Component of a dynein-regulating complex composed of at least lis-1 and nud-2. Interacts with nud-2; the interaction is direct. As to expression, expressed in all classes of neurons in the ventral cord. Expressed in the multinucleate spermathecal valves and adult seam cells.

The protein resides in the cytoplasm. It localises to the cytoskeleton. Its subcellular location is the microtubule organizing center. It is found in the centrosome. The protein localises to the chromosome. The protein resides in the centromere. It localises to the kinetochore. Its subcellular location is the nucleus envelope. Positively regulates the activity of the minus-end directed microtubule motor protein dynein. May enhance dynein-mediated microtubule sliding by targeting dynein to the microtubule plus end. Required for several dynein- and microtubule-dependent processes such as nuclear migration during cell division. Part of a complex with nud-2, which is recruited to the nuclear envelope by unc-83, where, in turn, it recruits dynein to the nuclear surface and regulates nuclear migration in hypodermal precursor cells. Plays a role in GABAergic synaptic vesicle localization in the ventral nerve cord. Required for neuronal cell differentiation. This chain is Lissencephaly-1 homolog, found in Caenorhabditis elegans.